The sequence spans 130 residues: Glycine cleavage system H protein (130 aa).

Residues 24 to 106 (IYSVGITEHA…YTDGWLFRIK (83 aa)) form the Lipoyl-binding domain. At Lys65 the chain carries N6-lipoyllysine.

This sequence belongs to the GcvH family. As to quaternary structure, the glycine cleavage system is composed of four proteins: P, T, L and H. (R)-lipoate is required as a cofactor.

Its function is as follows. The glycine cleavage system catalyzes the degradation of glycine. The H protein shuttles the methylamine group of glycine from the P protein to the T protein. This Pectobacterium atrosepticum (strain SCRI 1043 / ATCC BAA-672) (Erwinia carotovora subsp. atroseptica) protein is Glycine cleavage system H protein.